Here is a 430-residue protein sequence, read N- to C-terminus: Adenylosuccinate synthetase (430 aa).

Residues glycine 12–lysine 18 and glycine 40–threonine 42 contribute to the GTP site. The Proton acceptor role is filled by aspartate 13. Aspartate 13 and glycine 40 together coordinate Mg(2+). Residues aspartate 13–lysine 16, asparagine 38–histidine 41, threonine 128, arginine 142, glutamine 223, threonine 238, and arginine 302 each bind IMP. The active-site Proton donor is the histidine 41. Substrate is bound at residue threonine 298 to arginine 304. GTP-binding positions include arginine 304, serine 330–aspartate 332, and serine 412–glycine 414.

It belongs to the adenylosuccinate synthetase family. As to quaternary structure, homodimer. Mg(2+) is required as a cofactor.

It localises to the cytoplasm. The catalysed reaction is IMP + L-aspartate + GTP = N(6)-(1,2-dicarboxyethyl)-AMP + GDP + phosphate + 2 H(+). The protein operates within purine metabolism; AMP biosynthesis via de novo pathway; AMP from IMP: step 1/2. Its function is as follows. Plays an important role in the de novo pathway of purine nucleotide biosynthesis. Catalyzes the first committed step in the biosynthesis of AMP from IMP. This chain is Adenylosuccinate synthetase, found in Streptococcus sanguinis (strain SK36).